Reading from the N-terminus, the 233-residue chain is Lipoprotein-releasing system ATP-binding protein LolD (233 aa).

In terms of domain architecture, ABC transporter spans 7–233; sequence IHCEKLSKTY…QLQSESERNH (227 aa). 43-50 provides a ligand contact to ATP; the sequence is GASGAGKS.

It belongs to the ABC transporter superfamily. Lipoprotein translocase (TC 3.A.1.125) family. In terms of assembly, the complex is composed of two ATP-binding proteins (LolD) and two transmembrane proteins (LolC and LolE).

The protein resides in the cell inner membrane. Its function is as follows. Part of the ABC transporter complex LolCDE involved in the translocation of mature outer membrane-directed lipoproteins, from the inner membrane to the periplasmic chaperone, LolA. Responsible for the formation of the LolA-lipoprotein complex in an ATP-dependent manner. This is Lipoprotein-releasing system ATP-binding protein LolD from Coxiella burnetii (strain RSA 493 / Nine Mile phase I).